A 576-amino-acid chain; its full sequence is MNIQWILSDKIKRAMIAAGAEQNAEPLVRQSGKPQFGDYQANGIMGAAKKLGLNPREFAQKVLEQVDLSDIAEKTEIAGPGFINIFLNKNWVAQQADTALNTPNFGIKTAHPQTVVIDYSSPNVAKEMHVGHLRSTIIGDAVARALEFMGNHVIRANHVGDWGTQFGMLIAYLEKMENEHADAMQLSDLEAFYRAAKETYDNDEEFAVKARSYVVKLQSGDEYCRTMWKKLVDMTMQQNQRNYERLNVTLTEKDVMGESLYNPMLPAIVEDLKKQGLAVEDDGALVVYLDEFKNKDGDPMGVIVQKKDGGFLYTTTDIAAAKYRYHTLHADRALVFSDTRQSQHMQQAWLITRKAGYVPDSFSLEHHNFGMMLGKDGKPFKTRSGGTVKLADLLDEAVERATLLINEKNTALSEQEKAAVIEAVAIGSVKYADLSKNRTTDYVFDWDNMLSFEGNTAPYMQYAYTRIRSIFNKTDVNPTALSAAHIEIRNDKERALAIKLLQFEEAVQTVAKDGTPHILCNYLYELAGVFSSFYEHCPILNAEEPVKLSRLKLAKLTEKTLKQGLDLLGIKTVEKM.

The short motif at 122–132 (PNVAKEMHVGH) is the 'HIGH' region element.

Belongs to the class-I aminoacyl-tRNA synthetase family. In terms of assembly, monomer.

The protein localises to the cytoplasm. It catalyses the reaction tRNA(Arg) + L-arginine + ATP = L-arginyl-tRNA(Arg) + AMP + diphosphate. In Mannheimia succiniciproducens (strain KCTC 0769BP / MBEL55E), this protein is Arginine--tRNA ligase.